The primary structure comprises 422 residues: Steroid hormone receptor ERR1 (422 aa).

The disordered stretch occupies residues 1-67 (MSSQVVGIEP…GAGPGEQGGG (67 aa)). Phosphoserine is present on residues serine 19 and serine 22. Residues 58 to 67 (GAGPGEQGGG) are compositionally biased toward gly residues. Positions 76–151 (KRLCLVCGDV…VGMLKEGVRL (76 aa)) form a DNA-binding region, nuclear receptor. 2 consecutive NR C4-type zinc fingers follow at residues 79–99 (CLVC…CEAC) and 115–134 (CPAS…CQAC). N6-acetyllysine; by PCAF/KAT2B occurs at positions 129, 138, 160, and 162. Residues lysine 189 and lysine 402 each participate in a glycyl lysine isopeptide (Lys-Gly) (interchain with G-Cter in SUMO2) cross-link. Positions 192–420 (PVNALVSHLL…KLFLEMLEAM (229 aa)) constitute an NR LBD domain.

It belongs to the nuclear hormone receptor family. NR3 subfamily. In terms of assembly, binds DNA as a monomer or a homodimer. Interacts (via the AF2 domain) with coactivator PPARGC1A (via the L3 motif); the interaction greatly enhances transcriptional activity of genes involved in energy metabolism. Interacts with PIAS4; the interaction enhances sumoylation. Interacts with MAPK15; promotes re-localization of ESRRA to the cytoplasm through a XPO1-dependent mechanism then inhibits ESRRA transcriptional activity. In terms of processing, phosphorylation on Ser-19 enhances sumoylation on Lys-14 increasing repression of transcriptional activity. Sumoylated with SUMO2. Main site is Lys-14 which is enhanced by phosphorylation on Ser-19, cofactor activation, and by interaction with PIAS4. Sumoylation enhances repression of transcriptional activity, but has no effect on subcellular location nor on DNA binding. Post-translationally, reversibly acetylated. Acetylation by PCAF/KAT2 at Lys-129, Lys-138, Lys-160 and Lys-162 and PCAF/KAT2 decreases transcriptional activity probably by inhibiting DNA-binding activity; deacetylation involves SIRT1 and HDAC8 and increases DNA-binding.

It localises to the nucleus. It is found in the cytoplasm. In terms of biological role, binds to an ERR-alpha response element (ERRE) containing a single consensus half-site, 5'-TNAAGGTCA-3'. Can bind to the medium-chain acyl coenzyme A dehydrogenase (MCAD) response element NRRE-1 and may act as an important regulator of MCAD promoter. May function as a modulator of the estrogen signaling pathway in the uterus. Induces the expression of PERM1 in the skeletal muscle. In Canis lupus familiaris (Dog), this protein is Steroid hormone receptor ERR1 (ESRRA).